Here is a 607-residue protein sequence, read N- to C-terminus: Potassium transporter KimA (607 aa).

At 1–30 the chain is on the cytoplasmic side; that stretch reads MYHSIKRFLIGKPLKSQAAGEQKLTKLKAL. Residues 31–49 form a helical membrane-spanning segment; it reads AMLSSDALSSVAYGTEQIL. K(+) is bound by residues D36 and Y43. The Extracellular portion of the chain corresponds to 50–62; sequence IILATISAAAFWY. A helical transmembrane segment spans residues 63–84; the sequence is SIPIAVGVLILLLALILSYRQI. The Cytoplasmic portion of the chain corresponds to 85–105; sequence IYAYPQGGGAYIVSKENLGEK. A helical membrane pass occupies residues 106–134; it reads PGLIAGGSLLVDYILTVAVSISAGTDAIT. K(+) contacts are provided by D117 and S125. The Extracellular portion of the chain corresponds to 135 to 142; it reads SAFPALHD. The chain crosses the membrane as a helical span at residues 143-162; it reads YHVPIAIFLVLVIMILNLRG. Residues 163-166 are Cytoplasmic-facing; sequence LSES. The chain crosses the membrane as a helical span at residues 167 to 190; that stretch reads ASILAYPVYLFVVALLVLIAVGLF. The Extracellular segment spans residues 191 to 214; the sequence is KLMTGQIDQPAHHTSLGTPVAGIT. A helical transmembrane segment spans residues 215 to 238; that stretch reads LFLLLKAFSSGCSALTGVEAISNA. Residues 239–249 lie on the Cytoplasmic side of the membrane; that stretch reads IPAFKNPPARN. A helical membrane pass occupies residues 250–271; the sequence is AARTLAMMGILLAILFSGITVL. Topologically, residues 272 to 298 are extracellular; that stretch reads AYGYGTAPKPDETVVSQIASETFGRNV. A helical transmembrane segment spans residues 299-323; sequence FYYVIQGVTSLILVLAANTGFSAFP. Topologically, residues 324–347 are cytoplasmic; it reads QLAFNLARDQYMPRMFTVRGDRLG. The helical transmembrane segment at 348–366 threads the bilayer; the sequence is FSNGIIFLGFASIVLIILF. Over 367-372 the chain is Extracellular; the sequence is GGQTEH. A helical membrane pass occupies residues 373 to 393; the sequence is LIPLYAVGVFIPFTLSQTGMC. The Cytoplasmic segment spans residues 394–405; that stretch reads MKWIKQKPKGWI. Residues 406–428 form a helical membrane-spanning segment; sequence GKMLINSCGALISFMVLSILFVT. Topologically, residues 429–431 are extracellular; that stretch reads KFN. The chain crosses the membrane as a helical span at residues 432–447; sequence VVWPVLIFMPIVVLLF. The Cytoplasmic portion of the chain corresponds to 448–607; that stretch reads FAIKNHYTAV…VATLPYHFKK (160 aa).

It belongs to the amino acid-polyamine-organocation (APC) superfamily. In terms of assembly, homodimer.

The protein localises to the cell membrane. It carries out the reaction K(+)(in) + H(+)(in) = K(+)(out) + H(+)(out). Potassium uptake increases at lower external pH and is abolished by the proton ionophore carbonyl cyanide m-chlorophenylhydrazone (CCCP). Binds cyclic di-AMP (c-di-AMP), which inhibits the potassium transport activity. Functionally, high-affinity potassium transporter. Functions as a K(+)/H(+) symporter. This is Potassium transporter KimA from Bacillus subtilis (strain 168).